The following is a 360-amino-acid chain: MADSVLIAAGGTGGHVFPALAVADALRAQGVEVTFAGTATGMEARLVPERGYTLHTLDMQGLRGKGIRRWLRAPWRVSRAILQARRILRQTRSHVVLGMGGYVTAPVGIAAWTLGRPLCLHEQNAVAGLSNRLLAPLARRVFLGFPGARLARGEWVGNPVREAIHALPTPQERFHDRKGPVRLLIMGGSQGAQVLNAVSAAALSGMTDAERPAIWHQTGRDHAESTRAAYAQARIDAKVEPFIDDMAAALGWADLALCRAGAATIAELAAAGLGAILIPFPFAVDDHQAANARFLEKAGAARMLRQEGLDALQLRDVLRPLLADPELRLRWAEAARRQAKGDAAATVAAACIECAGGIDA.

UDP-N-acetyl-alpha-D-glucosamine-binding positions include 12–14 (TGG), asparagine 124, arginine 161, serine 189, isoleucine 243, and glutamine 288.

The protein belongs to the glycosyltransferase 28 family. MurG subfamily.

It is found in the cell inner membrane. It carries out the reaction di-trans,octa-cis-undecaprenyl diphospho-N-acetyl-alpha-D-muramoyl-L-alanyl-D-glutamyl-meso-2,6-diaminopimeloyl-D-alanyl-D-alanine + UDP-N-acetyl-alpha-D-glucosamine = di-trans,octa-cis-undecaprenyl diphospho-[N-acetyl-alpha-D-glucosaminyl-(1-&gt;4)]-N-acetyl-alpha-D-muramoyl-L-alanyl-D-glutamyl-meso-2,6-diaminopimeloyl-D-alanyl-D-alanine + UDP + H(+). It functions in the pathway cell wall biogenesis; peptidoglycan biosynthesis. Its function is as follows. Cell wall formation. Catalyzes the transfer of a GlcNAc subunit on undecaprenyl-pyrophosphoryl-MurNAc-pentapeptide (lipid intermediate I) to form undecaprenyl-pyrophosphoryl-MurNAc-(pentapeptide)GlcNAc (lipid intermediate II). This Acidithiobacillus ferrooxidans (strain ATCC 23270 / DSM 14882 / CIP 104768 / NCIMB 8455) (Ferrobacillus ferrooxidans (strain ATCC 23270)) protein is UDP-N-acetylglucosamine--N-acetylmuramyl-(pentapeptide) pyrophosphoryl-undecaprenol N-acetylglucosamine transferase.